The primary structure comprises 554 residues: Phenylalanine--tRNA ligase beta subunit (554 aa).

Positions 276–351 (LTPKSRMISV…INYGYEKFEG (76 aa)) constitute a B5 domain. 4 residues coordinate Mg(2+): Asp-329, Asp-335, Glu-338, and Glu-339.

It belongs to the phenylalanyl-tRNA synthetase beta subunit family. Type 2 subfamily. In terms of assembly, tetramer of two alpha and two beta subunits. It depends on Mg(2+) as a cofactor.

Its subcellular location is the cytoplasm. The catalysed reaction is tRNA(Phe) + L-phenylalanine + ATP = L-phenylalanyl-tRNA(Phe) + AMP + diphosphate + H(+). The sequence is that of Phenylalanine--tRNA ligase beta subunit from Methanococcus maripaludis (strain C6 / ATCC BAA-1332).